A 254-amino-acid chain; its full sequence is Autophagy-related protein 5 (254 aa).

A Glycyl lysine isopeptide (Lys-Gly) (interchain with G-Cter in ATG12) cross-link involves residue lysine 102.

The protein belongs to the ATG5 family. In terms of assembly, conjugated with ATG12. The ATG5-ATG12 conjugate forms a complex with several units of ATG16. The ATG12-ATG5 conjugate also associates with ATG3. Post-translationally, conjugated to ATG12; which is essential for autophagy. Conjugation with ATG12 involves ATG7 as an E1-like activating enzyme and ATG10 as an E2-like conjugating enzyme.

Its subcellular location is the preautophagosomal structure membrane. Its function is as follows. Involved in cytoplasm to vacuole transport (Cvt) and autophagic vesicle formation. Autophagy is essential for maintenance of amino acid levels and protein synthesis under nitrogen starvation. Required for selective autophagic degradation of the nucleus (nucleophagy). Also required for mitophagy, which eliminates defective or superfluous mitochondria in order to fulfill cellular energy requirements and prevent excess ROS production. Conjugation with ATG12, through a ubiquitin-like conjugating system involving ATG7 as an E1-like activating enzyme and ATG10 as an E2-like conjugating enzyme, is essential for its function. The ATG12-ATG5 conjugate acts as an E3-like enzyme which is required for lipidation of ATG8 and ATG8 association to the vesicle membranes. ATG12-ATG5 rearranges the ATG3 catalytic center and enhances its E2 activity. Autophagy is required for proper vegetative growth, asexual/sexual reproduction, and full virulence. Autophagy is particularly involved in the biosynthesis of deoxynivalenol (DON), an important virulence determinant. This Gibberella zeae (strain ATCC MYA-4620 / CBS 123657 / FGSC 9075 / NRRL 31084 / PH-1) (Wheat head blight fungus) protein is Autophagy-related protein 5.